A 59-amino-acid chain; its full sequence is UPF0434 protein plu1633 (59 aa).

This sequence belongs to the UPF0434 family.

The protein is UPF0434 protein plu1633 of Photorhabdus laumondii subsp. laumondii (strain DSM 15139 / CIP 105565 / TT01) (Photorhabdus luminescens subsp. laumondii).